Reading from the N-terminus, the 226-residue chain is Protein transport protein sec20 (226 aa).

The Cytoplasmic portion of the chain corresponds to 1–189 (MADVLNALEE…IKSLKLSDRS (189 aa)). Positions 53–75 (LRYEKAVQEYIRLNRRYRNKIAS) form a coiled coil. Residue S97 is modified to Phosphoserine. The chain crosses the membrane as a helical; Anchor for type IV membrane protein span at residues 190–210 (DYFLVVSGFGFFIFVVVYLLF). Topologically, residues 211-226 (KRIVWPILSMFLWFLR) are lumenal.

This sequence belongs to the SEC20 family. Component of a SNARE complex consisting of ufe1, sec20, sec22 and use1. Interacts with tip20 through its cytoplasmic domain.

It is found in the endoplasmic reticulum membrane. Functionally, SNARE required for targeting and fusion of Golgi-derived retrograde transport vesicles with the ER. The polypeptide is Protein transport protein sec20 (Schizosaccharomyces pombe (strain 972 / ATCC 24843) (Fission yeast)).